We begin with the raw amino-acid sequence, 427 residues long: Lipophilic envelope-spanning tunnel protein A (427 aa).

Residues 1 to 75 (MALNTPQITP…LTRLAAMAFT (75 aa)) are Cytoplasmic-facing. Residues 76–96 (MLLLMPFAWGEPLLHIWLLGI) form a helical membrane-spanning segment. The Periplasmic portion of the chain corresponds to 97 to 120 (RIDANVMQGIWQMTKQGDAITGSM). The helical transmembrane segment at 121-141 (VFFCVIGAPLILVTSIAYLWF) threads the bilayer. Residues 142 to 269 (GNRLGMNLRP…RHSLQKCWAA (128 aa)) are Cytoplasmic-facing. The chain crosses the membrane as a helical span at residues 270–290 (LLASIVLLLPANLLPISIIYL). Residues 291 to 310 (NGGRQEDTILSGIMSLASSN) lie on the Periplasmic side of the membrane. Residues 311-331 (IAVAGIVFIASILVPFTKVIV) traverse the membrane as a helical segment. The Cytoplasmic segment spans residues 332–350 (MFTLLLSIHFKCQQGLRTR). A helical membrane pass occupies residues 351 to 371 (ILLLRMVTWIGRWSMLDLFVI). Residues 372–382 (SLTMSLINRDQ) are Periplasmic-facing. A helical membrane pass occupies residues 383–403 (ILAFTMGPAAFYFGAAVILTI). Over 404–427 (LAVEWLDSRLLWDAHESGNARFDD) the chain is Cytoplasmic.

It belongs to the PqiA family. As to quaternary structure, may interact with LetB in the inner membrane.

It localises to the cell inner membrane. Functionally, could be part, together with LetB, of a system that transports lipids between the inner membrane and the outer membrane. Contributes to membrane integrity. This is Lipophilic envelope-spanning tunnel protein A from Escherichia coli (strain K12).